Here is a 160-residue protein sequence, read N- to C-terminus: Ribonuclease H (160 aa).

An RNase H type-1 domain is found at 5-146 (PGGLVEIWTD…VDQLATAARE (142 aa)). Residues Asp14, Glu52, Asp74, and Asp138 each contribute to the Mg(2+) site.

Belongs to the RNase H family. Monomer. It depends on Mg(2+) as a cofactor.

Its subcellular location is the cytoplasm. The enzyme catalyses Endonucleolytic cleavage to 5'-phosphomonoester.. Endonuclease that specifically degrades the RNA of RNA-DNA hybrids. The chain is Ribonuclease H from Acidiphilium cryptum (strain JF-5).